We begin with the raw amino-acid sequence, 762 residues long: Glucan endo-1,3-beta-glucosidase BGN13.1 (762 aa).

Positions 1 to 16 (MLKLTALVALLLGAAS) are cleaved as a signal peptide. Residues 17 to 33 (ATPTPSPPASDEGITKR) constitute a propeptide that is removed on maturation.

The protein belongs to the glycosyl hydrolase 55 family. Post-translationally, does not seem to be glycosylated.

It is found in the secreted. The catalysed reaction is Hydrolysis of (1-&gt;3)-beta-D-glucosidic linkages in (1-&gt;3)-beta-D-glucans.. With respect to regulation, inhibited by glucose. Its function is as follows. Involved in mycoparasitism, hydrolyzes yeast and fungal cell walls. Classified as a small-oligosaccharide-producing type based its the end products: glucose, laminaribiose or laminaritetraose. The protein is Glucan endo-1,3-beta-glucosidase BGN13.1 (bgn13.1) of Trichoderma harzianum (Hypocrea lixii).